The sequence spans 375 residues: POU domain, class 3, transcription factor 1-A (375 aa).

3 disordered regions span residues 1 to 29, 67 to 138, and 151 to 200; these read MAAT…RMHQ, PASD…HQPL, and MLGP…PSSD. Polar residues-rich tracts occupy residues 107 to 117, 129 to 138, and 151 to 160; these read VHQQSPSSHAW, SPSSNSHQPL, and MLGPQASSLH. The span at 162-177 shows a compositional bias: basic and acidic residues; the sequence is SMRDPLHDDPGVHDTQ. Residues 194 to 268 enclose the POU-specific domain; that stretch reads EDAPSSDDLE…LLNKWLEETD (75 aa). Positions 286–345 form a DNA-binding region, homeobox; sequence KRKKRTSIEVGVKGALENHFLKCPKPSAHEITSLADSLQLEKEVVRVWFCNRRQKEKRMT.

The protein belongs to the POU transcription factor family. Class-3 subfamily. In embryos at the neural fold stage, localized primarily in the anterior neural plate, and localized mostly in the anterior region of the nerve cord of neurula stage embryos. In tailbud stages, expressed predominantly in the eye and brain, with weak expression along the length of the nerve cord. In adults, expressed in skin and brain.

The protein localises to the nucleus. Functionally, acts as a transcription factor. May play a role in neuronal differentiation. The protein is POU domain, class 3, transcription factor 1-A (pou3f1-a) of Xenopus laevis (African clawed frog).